Consider the following 371-residue polypeptide: 4-hydroxy-3-methylbut-2-en-1-yl diphosphate synthase (flavodoxin) (371 aa).

4 residues coordinate [4Fe-4S] cluster: cysteine 270, cysteine 273, cysteine 305, and glutamate 312.

The protein belongs to the IspG family. [4Fe-4S] cluster serves as cofactor.

It catalyses the reaction (2E)-4-hydroxy-3-methylbut-2-enyl diphosphate + oxidized [flavodoxin] + H2O + 2 H(+) = 2-C-methyl-D-erythritol 2,4-cyclic diphosphate + reduced [flavodoxin]. It participates in isoprenoid biosynthesis; isopentenyl diphosphate biosynthesis via DXP pathway; isopentenyl diphosphate from 1-deoxy-D-xylulose 5-phosphate: step 5/6. Its function is as follows. Converts 2C-methyl-D-erythritol 2,4-cyclodiphosphate (ME-2,4cPP) into 1-hydroxy-2-methyl-2-(E)-butenyl 4-diphosphate. The polypeptide is 4-hydroxy-3-methylbut-2-en-1-yl diphosphate synthase (flavodoxin) (Psychrobacter arcticus (strain DSM 17307 / VKM B-2377 / 273-4)).